The chain runs to 403 residues: UPF0229 protein CKR_0568 (403 aa).

Residues 71–109 (SSGVGSGDGSQKKGDRIGKAIKDRDGKGNQGAGNQEGED) form a disordered region. Residues 80 to 97 (SQKKGDRIGKAIKDRDGK) are compositionally biased toward basic and acidic residues.

It belongs to the UPF0229 family.

This Clostridium kluyveri (strain NBRC 12016) protein is UPF0229 protein CKR_0568.